A 348-amino-acid polypeptide reads, in one-letter code: Glucose 1-dehydrogenase 2 (348 aa).

Cys-39 lines the Zn(2+) pocket. Position 41 (Thr-41) interacts with substrate. Residues His-64 and Glu-65 each coordinate Zn(2+). Substrate contacts are provided by Glu-110 and Glu-146. Glu-146 serves as a coordination point for Zn(2+). NADP(+) is bound by residues Ala-178–Val-181, Leu-260–Val-262, and Ser-289–Asn-291. Asn-291 is a binding site for substrate.

The protein belongs to the zinc-containing alcohol dehydrogenase family. Glucose 1-dehydrogenase subfamily. The cofactor is Zn(2+).

The catalysed reaction is D-glucose + NAD(+) = D-glucono-1,5-lactone + NADH + H(+). The enzyme catalyses D-glucose + NADP(+) = D-glucono-1,5-lactone + NADPH + H(+). Catalyzes the NAD(P)(+)-dependent oxidation of D-glucose to D-gluconate via gluconolactone. Can utilize both NAD(+) and NADP(+) as electron acceptor. Is involved in the degradation of glucose through a non-phosphorylative variant of the Entner-Doudoroff pathway. In Vulcanisaeta moutnovskia (strain 768-28), this protein is Glucose 1-dehydrogenase 2.